The following is a 207-amino-acid chain: Urease accessory protein UreG (207 aa).

16–23 (GPVGSGKT) is a binding site for GTP.

It belongs to the SIMIBI class G3E GTPase family. UreG subfamily. In terms of assembly, homodimer. UreD, UreF and UreG form a complex that acts as a GTP-hydrolysis-dependent molecular chaperone, activating the urease apoprotein by helping to assemble the nickel containing metallocenter of UreC. The UreE protein probably delivers the nickel.

The protein localises to the cytoplasm. In terms of biological role, facilitates the functional incorporation of the urease nickel metallocenter. This process requires GTP hydrolysis, probably effectuated by UreG. The chain is Urease accessory protein UreG from Shewanella halifaxensis (strain HAW-EB4).